Here is a 425-residue protein sequence, read N- to C-terminus: Serine--tRNA ligase (425 aa).

Residue 229–231 (TSE) participates in L-serine binding. Residues 259-261 (RKE) and V275 each bind ATP. E282 provides a ligand contact to L-serine. Residue 349–352 (EVTS) participates in ATP binding. Position 384 (T384) interacts with L-serine.

It belongs to the class-II aminoacyl-tRNA synthetase family. Type-1 seryl-tRNA synthetase subfamily. Homodimer. The tRNA molecule binds across the dimer.

It is found in the cytoplasm. It catalyses the reaction tRNA(Ser) + L-serine + ATP = L-seryl-tRNA(Ser) + AMP + diphosphate + H(+). The enzyme catalyses tRNA(Sec) + L-serine + ATP = L-seryl-tRNA(Sec) + AMP + diphosphate + H(+). It functions in the pathway aminoacyl-tRNA biosynthesis; selenocysteinyl-tRNA(Sec) biosynthesis; L-seryl-tRNA(Sec) from L-serine and tRNA(Sec): step 1/1. Catalyzes the attachment of serine to tRNA(Ser). Is also able to aminoacylate tRNA(Sec) with serine, to form the misacylated tRNA L-seryl-tRNA(Sec), which will be further converted into selenocysteinyl-tRNA(Sec). The chain is Serine--tRNA ligase from Borrelia garinii subsp. bavariensis (strain ATCC BAA-2496 / DSM 23469 / PBi) (Borreliella bavariensis).